A 156-amino-acid polypeptide reads, in one-letter code: Phosphopantetheine adenylyltransferase (156 aa).

T10 contributes to the substrate binding site. Residues T10 to F11 and H18 contribute to the ATP site. Substrate contacts are provided by K42, L74, and R88. Residues G89–R91, E99, and W124–S130 contribute to the ATP site.

Belongs to the bacterial CoaD family. Homohexamer. It depends on Mg(2+) as a cofactor.

It is found in the cytoplasm. It catalyses the reaction (R)-4'-phosphopantetheine + ATP + H(+) = 3'-dephospho-CoA + diphosphate. The protein operates within cofactor biosynthesis; coenzyme A biosynthesis; CoA from (R)-pantothenate: step 4/5. In terms of biological role, reversibly transfers an adenylyl group from ATP to 4'-phosphopantetheine, yielding dephospho-CoA (dPCoA) and pyrophosphate. The polypeptide is Phosphopantetheine adenylyltransferase (Hamiltonella defensa subsp. Acyrthosiphon pisum (strain 5AT)).